Here is a 302-residue protein sequence, read N- to C-terminus: tRNA demethylase abh1 (302 aa).

Residues tryptophan 142 and 149–151 (YDW) each bind substrate. Residues 187-299 (KAEAAIVNFY…RVNFNVRQVR (113 aa)) enclose the Fe2OG dioxygenase domain. 194-196 (NFY) serves as a coordination point for 2-oxoglutarate. Fe cation is bound by residues histidine 205 and aspartate 207. Residue arginine 235 coordinates substrate. A Fe cation-binding site is contributed by histidine 261. A 2-oxoglutarate-binding site is contributed by 290 to 296 (RVNFNVR).

This sequence belongs to the alkB family. Fe(2+) serves as cofactor.

The protein localises to the cytoplasm. Its subcellular location is the nucleus. It carries out the reaction an N(1)-methyladenosine in tRNA + 2-oxoglutarate + O2 = an adenosine in tRNA + formaldehyde + succinate + CO2. The catalysed reaction is N(1)-methyladenosine(58) in tRNA + 2-oxoglutarate + O2 = adenosine(58) in tRNA + formaldehyde + succinate + CO2. Dioxygenase that acts as on nucleic acids, such as DNA and tRNA. Requires molecular oxygen, alpha-ketoglutarate and iron. Mainly acts as a tRNA demethylase by removing N(1)-methyladenine from various tRNAs, with a preference for N(1)-methyladenine at position 58 (m1A58) present on a stem loop structure of tRNAs. Acts as a regulator of translation initiation and elongation. Does not appear to possess DNA repair activity; no activity towards methylated DNA or etheno adducts. Exhibits a weak and unstable DNA lyase activity; this activity is probably not biologically significant and proceeds by a mechanism different from the classical dioxygenase reaction as it does not require 2-oxoglutarate or iron. The protein is tRNA demethylase abh1 (abh1) of Schizosaccharomyces pombe (strain 972 / ATCC 24843) (Fission yeast).